Reading from the N-terminus, the 220-residue chain is Probable septum site-determining protein MinC (220 aa).

This sequence belongs to the MinC family. In terms of assembly, interacts with MinD and FtsZ.

Cell division inhibitor that blocks the formation of polar Z ring septums. Rapidly oscillates between the poles of the cell to destabilize FtsZ filaments that have formed before they mature into polar Z rings. Prevents FtsZ polymerization. The sequence is that of Probable septum site-determining protein MinC from Photobacterium profundum (strain SS9).